Reading from the N-terminus, the 1508-residue chain is Ras guanine nucleotide exchange factor Y (1508 aa).

Disordered stretches follow at residues 1–73 (MIII…NNNE), 128–182 (KVLS…PKSV), 197–272 (IDNN…YSTS), 396–517 (ILQC…EDED), 565–593 (LSENRTKDLNQPSSQFSPSTSPSTNSIPT), 606–727 (LPNI…AEPS), 831–1021 (NVII…SNKE), and 1153–1172 (TNEDEDNSNSNSNSNKTNKN). Low complexity-rich tracts occupy residues 9-22 (NINNSNNSNSNNNS) and 33-72 (NNNNTITGKNTNEIMNNNNNSNNNNNNNNNNNNNNNNNNN). Polar residues-rich tracts occupy residues 128 to 150 (KVLSSPSKEVNSLKKSTNGTNTI) and 172 to 182 (DRTSQDIPKSV). Residues 199 to 216 (NNTTNNNSNNNNNSSLST) are compositionally biased toward low complexity. Basic and acidic residues predominate over residues 223–232 (DSLETNPIKD). Residues 233-250 (EESEESEESEESKEEEEE) show a composition bias toward acidic residues. The segment covering 255–272 (IKTTKTTSETIESSYSTS) has biased composition (low complexity). The segment covering 399-409 (CKDDSSSKDQD) has biased composition (basic and acidic residues). Over residues 413–447 (NNSAGSSGNSSASNSNRNSIAFSSSNHFSSESSQS) the composition is skewed to low complexity. Over residues 465 to 475 (PQSPSPSPSPP) the composition is skewed to pro residues. Residues 492–510 (FNQQTNFSVSPTKSPSNEK) show a composition bias toward polar residues. Composition is skewed to low complexity over residues 574–593 (NQPSSQFSPSTSPSTNSIPT), 606–660 (LPNI…LTES), 668–687 (NNNNNNNKNINNNNNNNNNN), 831–855 (NVIISNNTGNNNNNNNSSKNNNTVK), 862–891 (NKSSSSSQNNSPPSDFSLSVSPSPCSSLTP), 942–984 (SLWS…SPPT), 993–1019 (ITTGSSPPSTAGTSPPNDNGNNNNNSN), and 1160–1172 (SNSNSNSNKTNKN). The stretch at 659-686 (ESLKTRIEENNNNNNNKNINNNNNNNNN) forms a coiled coil. The 161-residue stretch at 1074–1234 (NRIKVRSASL…IILKIIDRKA (161 aa)) folds into the N-terminal Ras-GEF domain. Residues 1278-1508 (DDLEIARQLT…LYKQSKIIEP (231 aa)) form the Ras-GEF domain.

In terms of biological role, promotes the exchange of Ras-bound GDP by GTP. This Dictyostelium discoideum (Social amoeba) protein is Ras guanine nucleotide exchange factor Y (gefY).